A 216-amino-acid chain; its full sequence is ATP phosphoribosyltransferase (216 aa).

It belongs to the ATP phosphoribosyltransferase family. Short subfamily. As to quaternary structure, heteromultimer composed of HisG and HisZ subunits.

It is found in the cytoplasm. It catalyses the reaction 1-(5-phospho-beta-D-ribosyl)-ATP + diphosphate = 5-phospho-alpha-D-ribose 1-diphosphate + ATP. It functions in the pathway amino-acid biosynthesis; L-histidine biosynthesis; L-histidine from 5-phospho-alpha-D-ribose 1-diphosphate: step 1/9. Catalyzes the condensation of ATP and 5-phosphoribose 1-diphosphate to form N'-(5'-phosphoribosyl)-ATP (PR-ATP). Has a crucial role in the pathway because the rate of histidine biosynthesis seems to be controlled primarily by regulation of HisG enzymatic activity. In Nitrosomonas eutropha (strain DSM 101675 / C91 / Nm57), this protein is ATP phosphoribosyltransferase.